The primary structure comprises 565 residues: NAD-dependent malic enzyme (565 aa).

Residue Y104 is the Proton donor of the active site. R157 provides a ligand contact to NAD(+). The active-site Proton acceptor is K175. A divalent metal cation-binding residues include E246, D247, and D270. Residues D270 and N418 each contribute to the NAD(+) site.

This sequence belongs to the malic enzymes family. Homotetramer. Requires Mg(2+) as cofactor. Mn(2+) serves as cofactor.

It carries out the reaction (S)-malate + NAD(+) = pyruvate + CO2 + NADH. The enzyme catalyses oxaloacetate + H(+) = pyruvate + CO2. The sequence is that of NAD-dependent malic enzyme from Shigella boydii serotype 18 (strain CDC 3083-94 / BS512).